Consider the following 369-residue polypeptide: Anhydro-N-acetylmuramic acid kinase (369 aa).

Residue 12–19 (GTSLDGVD) participates in ATP binding.

Belongs to the anhydro-N-acetylmuramic acid kinase family.

It catalyses the reaction 1,6-anhydro-N-acetyl-beta-muramate + ATP + H2O = N-acetyl-D-muramate 6-phosphate + ADP + H(+). It functions in the pathway amino-sugar metabolism; 1,6-anhydro-N-acetylmuramate degradation. The protein operates within cell wall biogenesis; peptidoglycan recycling. Catalyzes the specific phosphorylation of 1,6-anhydro-N-acetylmuramic acid (anhMurNAc) with the simultaneous cleavage of the 1,6-anhydro ring, generating MurNAc-6-P. Is required for the utilization of anhMurNAc either imported from the medium or derived from its own cell wall murein, and thus plays a role in cell wall recycling. This chain is Anhydro-N-acetylmuramic acid kinase, found in Actinobacillus pleuropneumoniae serotype 7 (strain AP76).